A 699-amino-acid polypeptide reads, in one-letter code: LMBR1 domain-containing protein 2 homolog (699 aa).

Residues 1-3 (MAY) are Extracellular-facing. A helical membrane pass occupies residues 4–26 (LLTFGIIAALCLASISLYRYGNI). Residues 27-30 (PRQH) lie on the Cytoplasmic side of the membrane. The helical transmembrane segment at 31-51 (ILVTLSVLTAWCFSFLIVFTI) threads the bilayer. The Extracellular segment spans residues 52-106 (PLDVTSTLYRQCLAEHKLALDAAGNASTTANITPPPECQEPWGMVPESVFPNLWR). Residue N76 is glycosylated (N-linked (GlcNAc...) asparagine). The chain crosses the membrane as a helical span at residues 107–127 (IIYWSSQFLTWLIMPLMQSYL). Topologically, residues 128-144 (KAGDFTIKGKLKSALIE) are cytoplasmic. Residues 145–165 (NAIYYGSYLFICGVLLIYIAV) form a helical membrane-spanning segment. Topologically, residues 166 to 181 (KGVPLDWQKLKAIASS) are extracellular. A helical membrane pass occupies residues 182–202 (ASNTWGLFLLILLLGYALVEV). At 203–381 (PRSLWNNAKP…ECLLKAPFLK (179 aa)) the chain is on the cytoplasmic side. A helical membrane pass occupies residues 382–402 (TLCVVTATMSAMVVWSEVTFF). The Extracellular segment spans residues 403-426 (SRDPVLSIFANVIYLAKESYDFFT). A helical membrane pass occupies residues 427 to 447 (IEVFSMMVLCYFFYCTYSTIL). Residues 448-467 (RIRFLNLYYLAPHHQTNEHS) lie on the Cytoplasmic side of the membrane. The helical transmembrane segment at 468 to 488 (LIFSGMLLCRLTPPMCLNFLG) threads the bilayer. Over 489-514 (LIHMDSHIIPERMMETYYTRIMGHMD) the chain is Extracellular. Residues 515–535 (VIGIISNGFNIYFPMCMLAFC) traverse the membrane as a helical segment. Topologically, residues 536 to 699 (LSTWFSLGSR…PPPRGLFDDV (164 aa)) are cytoplasmic. Residues 564-592 (ELVQEGKDLIAREKRRRQRAEEAMARRRD) are a coiled coil. The interval 669–699 (FRGTSELDPDYEAENERRIVGPPPRGLFDDV) is disordered.

Belongs to the LIMR family.

The protein localises to the membrane. In Drosophila pseudoobscura pseudoobscura (Fruit fly), this protein is LMBR1 domain-containing protein 2 homolog.